The following is a 556-amino-acid chain: Formate--tetrahydrofolate ligase (556 aa).

65-72 (TPAGEGKS) serves as a coordination point for ATP.

It belongs to the formate--tetrahydrofolate ligase family.

The enzyme catalyses (6S)-5,6,7,8-tetrahydrofolate + formate + ATP = (6R)-10-formyltetrahydrofolate + ADP + phosphate. The protein operates within one-carbon metabolism; tetrahydrofolate interconversion. The polypeptide is Formate--tetrahydrofolate ligase (Streptococcus pneumoniae (strain Hungary19A-6)).